The chain runs to 278 residues: Probable endonuclease 4 (278 aa).

Residues His69, His109, Glu145, Asp179, His182, His214, Asp227, His229, and Glu259 each contribute to the Zn(2+) site.

Belongs to the AP endonuclease 2 family. It depends on Zn(2+) as a cofactor.

It catalyses the reaction Endonucleolytic cleavage to 5'-phosphooligonucleotide end-products.. Functionally, endonuclease IV plays a role in DNA repair. It cleaves phosphodiester bonds at apurinic or apyrimidinic (AP) sites, generating a 3'-hydroxyl group and a 5'-terminal sugar phosphate. The sequence is that of Probable endonuclease 4 from Bacteroides fragilis (strain ATCC 25285 / DSM 2151 / CCUG 4856 / JCM 11019 / LMG 10263 / NCTC 9343 / Onslow / VPI 2553 / EN-2).